Consider the following 285-residue polypeptide: Vacuolar protein sorting-associated protein 37B (285 aa).

The tract at residues 50 to 170 (ASNRSLAEGN…ELVLKGQRHP (121 aa)) is interaction with IST1. One can recognise a VPS37 C-terminal domain in the interval 84 to 173 (FEAYQIKKTK…LKGQRHPQAG (90 aa)). Disordered regions lie at residues 167-215 (QRHP…PPVP) and 242-285 (PLPP…FILQ). Pro residues-rich tracts occupy residues 173 to 184 (GAPPPPRVPEPS) and 206 to 215 (RIPPPPPPVP). Polar residues predominate over residues 250 to 259 (PSQQGFSAQL). Residues 262-275 (PYPPALPQRPPPRM) are compositionally biased toward pro residues. A compositionally biased stretch (low complexity) spans 276 to 285 (APHQPGFILQ).

Belongs to the VPS37 family. Component of the ESCRT-I complex (endosomal sorting complex required for transport I) which consists of TSG101, VPS28, a VPS37 protein (VPS37A to -D) and MVB12A or MVB12B in a 1:1:1:1 stoichiometry. Interacts with TSG101, VPS28, MVB12A and MVB12B. Component of the ESCRT-I complex (endosomal sorting complex required for transport I) which consists of TSG101, VPS28, a VPS37 protein (VPS37A to -D) and UBAP1 in a 1:1:1:1 stoichiometry. Interacts with CEP55. Interacts with IST1.

It is found in the late endosome membrane. In terms of biological role, component of the ESCRT-I complex, a regulator of vesicular trafficking process. Required for the sorting of endocytic ubiquitinated cargos into multivesicular bodies. May be involved in cell growth and differentiation. This is Vacuolar protein sorting-associated protein 37B (Vps37b) from Mus musculus (Mouse).